The chain runs to 189 residues: UPF0301 protein RF_0044 (189 aa).

Belongs to the UPF0301 (AlgH) family.

The sequence is that of UPF0301 protein RF_0044 from Rickettsia felis (strain ATCC VR-1525 / URRWXCal2) (Rickettsia azadi).